The following is a 503-amino-acid chain: Beta-amylase Tri a 17 (503 aa).

Positions 51, 91, and 99 each coordinate substrate. Glu-184 functions as the Proton donor in the catalytic mechanism. Positions 293, 298, and 340 each coordinate substrate. The active-site Proton acceptor is the Glu-378. Residues 379-380 and Arg-418 each bind substrate; that span reads NA.

The protein belongs to the glycosyl hydrolase 14 family.

The catalysed reaction is Hydrolysis of (1-&gt;4)-alpha-D-glucosidic linkages in polysaccharides so as to remove successive maltose units from the non-reducing ends of the chains.. The chain is Beta-amylase Tri a 17 (BMY1) from Triticum aestivum (Wheat).